The following is a 344-amino-acid chain: Serpentine receptor class alpha-27 (344 aa).

The next 7 membrane-spanning stretches (helical) occupy residues 28-48 (SIWMKINFVFVFILIFLTFYL), 67-87 (QILLMITLLNANLNQLIFLEI), 128-148 (GLLSALTFDRFFALYASTVYV), 157-177 (MLITVSIIVTVIVHIRTYGGV), 203-223 (AIFWIIMANCVLTIAVLLLNI), 252-272 (ICSVTSTQFVFLSFSTAALAI), and 287-307 (INIQYINGGVYGNLSIPVLIY).

It belongs to the nematode receptor-like protein sra family.

The protein resides in the membrane. This is Serpentine receptor class alpha-27 (sra-27) from Caenorhabditis elegans.